Here is a 124-residue protein sequence, read N- to C-terminus: Replication restart protein PriB (124 aa).

Residues 12–112 enclose the SSB domain; that stretch reads IDNCLTLTGI…LHTEQIEFID (101 aa).

Belongs to the PriB family. In terms of assembly, homodimer. Interacts with PriA and DnaT. Component of the replication restart primosome. Primosome assembly occurs via a 'hand-off' mechanism. PriA binds to replication forks, subsequently PriB then DnaT bind; DnaT then displaces ssDNA to generate the helicase loading substrate.

Functionally, involved in the restart of stalled replication forks, which reloads the replicative helicase on sites other than the origin of replication; the PriA-PriB pathway is the major replication restart pathway. During primosome assembly it facilitates complex formation between PriA and DnaT on DNA; stabilizes PriA on DNA. Stimulates the DNA unwinding activity of PriA helicase. In Haemophilus ducreyi (strain 35000HP / ATCC 700724), this protein is Replication restart protein PriB.